A 1009-amino-acid polypeptide reads, in one-letter code: MSYNNPNNSNSHLRPHAYNNSRRDDSDGDESSIEFLNQRSNTPLTQGTYNYHNTSTNSLNFQQPEPIYRNQTRTSLSDSYYDHPIFDTSQTQIQPPHDNPFTESYEMTDTSYQGNDHHYRTGQPNHLMNPTYNQAFIPHVYDEEDNDEQEYDQRIQYNQFQGDHFDLAAISYADDESQSQLDYVPTERVIPEGEEEEEEGETSFEKEPGSETISGPFGEERSFEEPPPQQEVRSKKLTRATGLNGHLVLDCPVADELLSKFPDYNPAEKSGGLSREFAFMRYTAVTCGPSNFYRDAYILRPVHYPIPRQTELMIVITMYNEDDILLGRTLKGVFKNIKYLESKARSSTWGKDSWKKIVVCIVSDGRTKINERAQALLAGLGVYQEGLAKSRVDDKKVQAHMFEYTTRVGISKVTDDVVKLTTEKVVPVQMLFCLKETNAKKINSHRWCFQAIGQVLDPKIVVLLDCGTQPSGRSLYELWKEFDRDHRVAGACGEITTSLKKRQMITNPLVYGQNFEYKISNILDKPTESSFGFISVLPGAFSAYRFIALQNDINGIGPLEKYFKGEFLHSSGELDPNDDEFQMKHLMLKEEAGIFTSNMYLAEDRILCFELVAKRGCNWLLRYCKSARAETDVPEGLAEFILQRRRWLNGSFFAAIYSLVHFYKVWTSSHSFGRKIFLHIEFFYQLINLIVSWFSIGSYFLVFRILTTSLGDKALGFAPGKILSVIFLWLYLASIVTTFVLSFGNKPKGTEKFYVTIVIFFAILMAYMIFAAIFMAVHSIQDIYRSGTRITVSLFFQNSEFRDLVVATSSTYALYFLASFLYFEPWHMFTSFVQYILLSPSYVNVLNIYAFCNIDDISWGTKGEVGGKSLGEAKLREDGTFDVSVPISKEQINQSYLDQLEKIRDPAPPEEKVLVTNTEDYYAFIRSMTVLVWMFTNFVVIALVLETGGFNQFVEATDLANLKSNRAAVFLTVILWTVAFMALFRFIGCIYYLITRLGREIKASEHATK.

Composition is skewed to polar residues over residues 1-12 (MSYNNPNNSNSH) and 34-62 (EFLNQRSNTPLTQGTYNYHNTSTNSLNFQ). Disordered stretches follow at residues 1-62 (MSYN…LNFQ) and 175-234 (DESQ…EVRS). The segment covering 192-202 (EGEEEEEEGET) has biased composition (acidic residues). 7 helical membrane passes run 647-667 (WLNGSFFAAIYSLVHFYKVWT), 682-702 (FFYQLINLIVSWFSIGSYFLV), 722-742 (ILSVIFLWLYLASIVTTFVLS), 757-777 (IVIFFAILMAYMIFAAIFMAV), 804-823 (LVVATSSTYALYFLASFLYF), 930-950 (VLVWMFTNFVVIALVLETGGF), and 967-987 (AAVFLTVILWTVAFMALFRFI).

This sequence belongs to the chitin synthase family.

It is found in the cell membrane. It catalyses the reaction [(1-&gt;4)-N-acetyl-beta-D-glucosaminyl](n) + UDP-N-acetyl-alpha-D-glucosamine = [(1-&gt;4)-N-acetyl-beta-D-glucosaminyl](n+1) + UDP + H(+). Polymerizes chitin, a structural polymer of the cell wall and septum, by transferring the sugar moiety of UDP-GlcNAc to the non-reducing end of the growing chitin polymer. The sequence is that of Chitin synthase 2 (CHS2) from Candida albicans (Yeast).